Consider the following 82-residue polypeptide: UPF0291 protein LVIS_1359 (82 aa).

It belongs to the UPF0291 family.

The protein resides in the cytoplasm. This Levilactobacillus brevis (strain ATCC 367 / BCRC 12310 / CIP 105137 / JCM 1170 / LMG 11437 / NCIMB 947 / NCTC 947) (Lactobacillus brevis) protein is UPF0291 protein LVIS_1359.